The chain runs to 93 residues: MRLFILVLTLLFGWLQYTLWFGKNGVSDYYTIESDIEAQQLVNTKLQARNSEMYAEIDDLKQGLDAIEERARHELGMLKEGETFYRIVGEENQ.

Over 1–3 the chain is Cytoplasmic; sequence MRL. The chain crosses the membrane as a helical span at residues 4–21; the sequence is FILVLTLLFGWLQYTLWF. Residues 22 to 93 lie on the Periplasmic side of the membrane; it reads GKNGVSDYYT…FYRIVGEENQ (72 aa). Positions 42-75 form a coiled coil; it reads VNTKLQARNSEMYAEIDDLKQGLDAIEERARHEL.

The protein belongs to the FtsB family. Part of a complex composed of FtsB, FtsL and FtsQ.

The protein localises to the cell inner membrane. In terms of biological role, essential cell division protein. May link together the upstream cell division proteins, which are predominantly cytoplasmic, with the downstream cell division proteins, which are predominantly periplasmic. This is Cell division protein FtsB from Vibrio vulnificus (strain YJ016).